The chain runs to 229 residues: Large ribosomal subunit protein uL1 (229 aa).

Belongs to the universal ribosomal protein uL1 family. In terms of assembly, part of the 50S ribosomal subunit.

Binds directly to 23S rRNA. The L1 stalk is quite mobile in the ribosome, and is involved in E site tRNA release. Functionally, protein L1 is also a translational repressor protein, it controls the translation of the L11 operon by binding to its mRNA. In Actinobacillus pleuropneumoniae serotype 3 (strain JL03), this protein is Large ribosomal subunit protein uL1.